The chain runs to 488 residues: Ribulose bisphosphate carboxylase large chain (488 aa).

Positions 127 and 177 each coordinate substrate. Catalysis depends on Lys-179, which acts as the Proton acceptor. Position 181 (Lys-181) interacts with substrate. Mg(2+)-binding residues include Lys-205, Asp-207, and Glu-208. Residue Lys-205 is modified to N6-carboxylysine. His-297 functions as the Proton acceptor in the catalytic mechanism. Residues Arg-298, His-330, and Ser-382 each contribute to the substrate site.

It belongs to the RuBisCO large chain family. Type I subfamily. In terms of assembly, heterohexadecamer of 8 large chains and 8 small chains. It depends on Mg(2+) as a cofactor.

It localises to the plastid. It is found in the chloroplast. It catalyses the reaction 2 (2R)-3-phosphoglycerate + 2 H(+) = D-ribulose 1,5-bisphosphate + CO2 + H2O. The catalysed reaction is D-ribulose 1,5-bisphosphate + O2 = 2-phosphoglycolate + (2R)-3-phosphoglycerate + 2 H(+). RuBisCO catalyzes two reactions: the carboxylation of D-ribulose 1,5-bisphosphate, the primary event in carbon dioxide fixation, as well as the oxidative fragmentation of the pentose substrate in the photorespiration process. Both reactions occur simultaneously and in competition at the same active site. In Chrysotila carterae (Marine alga), this protein is Ribulose bisphosphate carboxylase large chain.